A 26-amino-acid chain; its full sequence is uncharacterized protein (26 aa).

This is an uncharacterized protein from Escherichia coli (strain K12).